We begin with the raw amino-acid sequence, 518 residues long: Golgi-associated olfactory signaling regulator (518 aa).

The N-terminal stretch at 1-19 (MKSFSRILFLVFLLAGLRS) is a signal peptide. The Extracellular segment spans residues 20 to 409 (KAAPSAPLPL…GRPRGAAGGA (390 aa)). The interval 38–377 (HPSETSPLKG…ATLRAPQRHS (340 aa)) is disordered. The span at 92-106 (DLRETPHPESPETPK) shows a compositional bias: basic and acidic residues. The N-linked (GlcNAc...) asparagine glycan is linked to Asn-124. Positions 138 to 153 (TPGPTEMPHPGSPETP) are enriched in pro residues. N-linked (GlcNAc...) asparagine glycosylation occurs at Asn-156. 2 stretches are compositionally biased toward polar residues: residues 168–180 (TPNT…TPQE) and 187–207 (LNAT…NPTK). 2 N-linked (GlcNAc...) asparagine glycosylation sites follow: Asn-188 and Asn-220. Basic and acidic residues-rich tracts occupy residues 209–220 (PDPKSPEKHDLN) and 236–247 (DPSKTPHPESHV). Polar residues-rich tracts occupy residues 248 to 270 (THNP…QNAT) and 276 to 285 (SDPQISTSLY). The N-linked (GlcNAc...) asparagine glycan is linked to Asn-268. Residues 410 to 430 (LCLFFAGTALLIGIFVLLWCL) traverse the membrane as a helical segment. Residues 431-518 (YRRAARQRPF…SPATLPNNFV (88 aa)) lie on the Cytoplasmic side of the membrane. Residues 477–518 (HIATKQPPPTPPLPPKLPPPPRGGRPQRLEALSPATLPNNFV) form a disordered region. Over residues 482 to 499 (QPPPTPPLPPKLPPPPRG) the composition is skewed to pro residues.

Its subcellular location is the golgi apparatus membrane. Functionally, required for proper function of the olfactory system. May be involved in establishing the acuity of olfactory sensory signaling. The polypeptide is Golgi-associated olfactory signaling regulator (GFY) (Homo sapiens (Human)).